Here is a 147-residue protein sequence, read N- to C-terminus: Nucleoside diphosphate kinase (147 aa).

ATP is bound by residues Lys-9, Phe-57, Arg-85, Thr-91, Arg-102, and Asn-112. His-115 (pros-phosphohistidine intermediate) is an active-site residue.

This sequence belongs to the NDK family. As to quaternary structure, homotetramer. It depends on Mg(2+) as a cofactor.

Its subcellular location is the cytoplasm. It catalyses the reaction a 2'-deoxyribonucleoside 5'-diphosphate + ATP = a 2'-deoxyribonucleoside 5'-triphosphate + ADP. It carries out the reaction a ribonucleoside 5'-diphosphate + ATP = a ribonucleoside 5'-triphosphate + ADP. Functionally, major role in the synthesis of nucleoside triphosphates other than ATP. The ATP gamma phosphate is transferred to the NDP beta phosphate via a ping-pong mechanism, using a phosphorylated active-site intermediate. This chain is Nucleoside diphosphate kinase, found in Listeria monocytogenes serotype 4b (strain F2365).